Consider the following 415-residue polypeptide: Gamma-glutamyl phosphate reductase (415 aa).

It belongs to the gamma-glutamyl phosphate reductase family.

It localises to the cytoplasm. It carries out the reaction L-glutamate 5-semialdehyde + phosphate + NADP(+) = L-glutamyl 5-phosphate + NADPH + H(+). Its pathway is amino-acid biosynthesis; L-proline biosynthesis; L-glutamate 5-semialdehyde from L-glutamate: step 2/2. In terms of biological role, catalyzes the NADPH-dependent reduction of L-glutamate 5-phosphate into L-glutamate 5-semialdehyde and phosphate. The product spontaneously undergoes cyclization to form 1-pyrroline-5-carboxylate. The protein is Gamma-glutamyl phosphate reductase of Mycolicibacterium vanbaalenii (strain DSM 7251 / JCM 13017 / BCRC 16820 / KCTC 9966 / NRRL B-24157 / PYR-1) (Mycobacterium vanbaalenii).